The following is a 436-amino-acid chain: UPF0597 protein YhaM (436 aa).

The protein belongs to the UPF0597 family.

The chain is UPF0597 protein YhaM from Shigella sonnei (strain Ss046).